Reading from the N-terminus, the 213-residue chain is Ras-related protein RabK1 (213 aa).

Gly14–Leu21 serves as a coordination point for GTP. Positions Gly36–Phe43 match the Effector region motif. GTP-binding positions include Asn61–Ser65 and Thr119–Asp122.

The protein belongs to the small GTPase superfamily. Rab family.

This is Ras-related protein RabK1 (rabK1) from Dictyostelium discoideum (Social amoeba).